A 253-amino-acid polypeptide reads, in one-letter code: Indole-3-glycerol phosphate synthase (253 aa).

This sequence belongs to the TrpC family.

The enzyme catalyses 1-(2-carboxyphenylamino)-1-deoxy-D-ribulose 5-phosphate + H(+) = (1S,2R)-1-C-(indol-3-yl)glycerol 3-phosphate + CO2 + H2O. Its pathway is amino-acid biosynthesis; L-tryptophan biosynthesis; L-tryptophan from chorismate: step 4/5. The protein is Indole-3-glycerol phosphate synthase of Bacillus cereus (strain ZK / E33L).